Reading from the N-terminus, the 82-residue chain is Small ribosomal subunit protein eS21y (82 aa).

M1 is modified (N-acetylmethionine).

It belongs to the eukaryotic ribosomal protein eS21 family.

This Arabidopsis thaliana (Mouse-ear cress) protein is Small ribosomal subunit protein eS21y (RPS21C).